Consider the following 418-residue polypeptide: Serine hydroxymethyltransferase (418 aa).

(6S)-5,6,7,8-tetrahydrofolate is bound by residues leucine 121 and glycine 125–leucine 127. Position 230 is an N6-(pyridoxal phosphate)lysine (lysine 230). Serine 356–phenylalanine 358 is a (6S)-5,6,7,8-tetrahydrofolate binding site.

Belongs to the SHMT family. In terms of assembly, homodimer. Requires pyridoxal 5'-phosphate as cofactor.

It localises to the cytoplasm. It catalyses the reaction (6R)-5,10-methylene-5,6,7,8-tetrahydrofolate + glycine + H2O = (6S)-5,6,7,8-tetrahydrofolate + L-serine. It participates in one-carbon metabolism; tetrahydrofolate interconversion. It functions in the pathway amino-acid biosynthesis; glycine biosynthesis; glycine from L-serine: step 1/1. In terms of biological role, catalyzes the reversible interconversion of serine and glycine with tetrahydrofolate (THF) serving as the one-carbon carrier. This reaction serves as the major source of one-carbon groups required for the biosynthesis of purines, thymidylate, methionine, and other important biomolecules. Also exhibits THF-independent aldolase activity toward beta-hydroxyamino acids, producing glycine and aldehydes, via a retro-aldol mechanism. The polypeptide is Serine hydroxymethyltransferase (Alteromonas mediterranea (strain DSM 17117 / CIP 110805 / LMG 28347 / Deep ecotype)).